We begin with the raw amino-acid sequence, 102 residues long: Small ribosomal subunit protein uS10c (102 aa).

It belongs to the universal ribosomal protein uS10 family. Part of the 30S ribosomal subunit.

The protein resides in the plastid. It is found in the chloroplast. Its function is as follows. Involved in the binding of tRNA to the ribosomes. This chain is Small ribosomal subunit protein uS10c, found in Guillardia theta (Cryptophyte).